Here is an 89-residue protein sequence, read N- to C-terminus: Meiosis expressed gene 1 protein homolog (89 aa).

It belongs to the MEIG1 family.

The polypeptide is Meiosis expressed gene 1 protein homolog (Nematostella vectensis (Starlet sea anemone)).